The chain runs to 392 residues: Formate-dependent phosphoribosylglycinamide formyltransferase (392 aa).

N(1)-(5-phospho-beta-D-ribosyl)glycinamide-binding positions include 15-16 (EL) and glutamate 75. Residues arginine 107, lysine 148, 153–158 (SSGKGQ), 188–191 (EEFL), and glutamate 196 each bind ATP. The ATP-grasp domain occupies 112–302 (DLASEELALL…EFELHLRAVL (191 aa)). Mg(2+)-binding residues include glutamate 261 and glutamate 273. Residues aspartate 280, lysine 350, and 357-358 (RR) each bind N(1)-(5-phospho-beta-D-ribosyl)glycinamide.

It belongs to the PurK/PurT family. As to quaternary structure, homodimer.

The enzyme catalyses N(1)-(5-phospho-beta-D-ribosyl)glycinamide + formate + ATP = N(2)-formyl-N(1)-(5-phospho-beta-D-ribosyl)glycinamide + ADP + phosphate + H(+). It functions in the pathway purine metabolism; IMP biosynthesis via de novo pathway; N(2)-formyl-N(1)-(5-phospho-D-ribosyl)glycinamide from N(1)-(5-phospho-D-ribosyl)glycinamide (formate route): step 1/1. Involved in the de novo purine biosynthesis. Catalyzes the transfer of formate to 5-phospho-ribosyl-glycinamide (GAR), producing 5-phospho-ribosyl-N-formylglycinamide (FGAR). Formate is provided by PurU via hydrolysis of 10-formyl-tetrahydrofolate. The chain is Formate-dependent phosphoribosylglycinamide formyltransferase from Prochlorococcus marinus (strain MIT 9303).